We begin with the raw amino-acid sequence, 374 residues long: Nuclear hormone receptor family member nhr-57 (374 aa).

The nuclear receptor DNA-binding region spans 7–84 (RKYCSVCHQL…VGMNPEVVQA (78 aa)). NR C4-type zinc fingers lie at residues 10 to 30 (CSVCHQLGDGYHFGAIACKAC) and 48 to 67 (CRKKNECVIKMSSRDSCKSC). An NR LBD domain is found at 124-374 (QMTPTLCGVM…DKIYKIIDGQ (251 aa)).

This sequence belongs to the nuclear hormone receptor family.

The protein localises to the nucleus. Functionally, orphan nuclear receptor. This is Nuclear hormone receptor family member nhr-57 (nhr-57) from Caenorhabditis elegans.